The chain runs to 297 residues: Ribosomal RNA small subunit methyltransferase H (297 aa).

S-adenosyl-L-methionine contacts are provided by residues 37–39 (GGH), Asp-56, Phe-87, Asp-102, and His-109.

It belongs to the methyltransferase superfamily. RsmH family.

The protein localises to the cytoplasm. It catalyses the reaction cytidine(1402) in 16S rRNA + S-adenosyl-L-methionine = N(4)-methylcytidine(1402) in 16S rRNA + S-adenosyl-L-homocysteine + H(+). Specifically methylates the N4 position of cytidine in position 1402 (C1402) of 16S rRNA. This chain is Ribosomal RNA small subunit methyltransferase H, found in Borrelia turicatae (strain 91E135).